A 415-amino-acid chain; its full sequence is uncharacterized protein (415 aa).

The TRAM domain occupies 1–55 (MSTGTVTIDRLGAQGDGVARTEAGPVFAPFTLPGETVSLAVNKANGTLISLKEAS). Residues cysteine 63, cysteine 75, cysteine 78, and cysteine 152 each contribute to the [4Fe-4S] cluster site. S-adenosyl-L-methionine is bound by residues glutamine 252, phenylalanine 279, glutamate 299, and aspartate 347. The Nucleophile role is filled by cysteine 373.

It belongs to the class I-like SAM-binding methyltransferase superfamily. RNA M5U methyltransferase family.

This is an uncharacterized protein from Rhizobium meliloti (strain 1021) (Ensifer meliloti).